The sequence spans 469 residues: Glutamate--tRNA ligase (469 aa).

The 'HIGH' region signature appears at P11 to N21. The span at G118–P131 shows a compositional bias: basic and acidic residues. The tract at residues G118–P139 is disordered. Positions K243–R247 match the 'KMSKS' region motif. ATP is bound at residue K246.

The protein belongs to the class-I aminoacyl-tRNA synthetase family. Glutamate--tRNA ligase type 1 subfamily. In terms of assembly, monomer.

The protein localises to the cytoplasm. It carries out the reaction tRNA(Glu) + L-glutamate + ATP = L-glutamyl-tRNA(Glu) + AMP + diphosphate. Catalyzes the attachment of glutamate to tRNA(Glu) in a two-step reaction: glutamate is first activated by ATP to form Glu-AMP and then transferred to the acceptor end of tRNA(Glu). In Burkholderia pseudomallei (strain 1106a), this protein is Glutamate--tRNA ligase.